The chain runs to 398 residues: 4-hydroxy-3-methylbut-2-enyl diphosphate reductase (398 aa).

Position 66 (cysteine 66) interacts with [4Fe-4S] cluster. (2E)-4-hydroxy-3-methylbut-2-enyl diphosphate is bound at residue histidine 96. Histidine 96 contacts dimethylallyl diphosphate. Histidine 96 is an isopentenyl diphosphate binding site. A [4Fe-4S] cluster-binding site is contributed by cysteine 157. (2E)-4-hydroxy-3-methylbut-2-enyl diphosphate is bound at residue histidine 185. Histidine 185 is a binding site for dimethylallyl diphosphate. Histidine 185 contacts isopentenyl diphosphate. The active-site Proton donor is the glutamate 187. A (2E)-4-hydroxy-3-methylbut-2-enyl diphosphate-binding site is contributed by threonine 250. Position 288 (cysteine 288) interacts with [4Fe-4S] cluster. Residues serine 317, serine 318, asparagine 319, and serine 380 each contribute to the (2E)-4-hydroxy-3-methylbut-2-enyl diphosphate site. The dimethylallyl diphosphate site is built by serine 317, serine 318, asparagine 319, and serine 380. 4 residues coordinate isopentenyl diphosphate: serine 317, serine 318, asparagine 319, and serine 380.

It belongs to the IspH family. [4Fe-4S] cluster is required as a cofactor.

It carries out the reaction isopentenyl diphosphate + 2 oxidized [2Fe-2S]-[ferredoxin] + H2O = (2E)-4-hydroxy-3-methylbut-2-enyl diphosphate + 2 reduced [2Fe-2S]-[ferredoxin] + 2 H(+). It catalyses the reaction dimethylallyl diphosphate + 2 oxidized [2Fe-2S]-[ferredoxin] + H2O = (2E)-4-hydroxy-3-methylbut-2-enyl diphosphate + 2 reduced [2Fe-2S]-[ferredoxin] + 2 H(+). It functions in the pathway isoprenoid biosynthesis; dimethylallyl diphosphate biosynthesis; dimethylallyl diphosphate from (2E)-4-hydroxy-3-methylbutenyl diphosphate: step 1/1. It participates in isoprenoid biosynthesis; isopentenyl diphosphate biosynthesis via DXP pathway; isopentenyl diphosphate from 1-deoxy-D-xylulose 5-phosphate: step 6/6. Catalyzes the conversion of 1-hydroxy-2-methyl-2-(E)-butenyl 4-diphosphate (HMBPP) into a mixture of isopentenyl diphosphate (IPP) and dimethylallyl diphosphate (DMAPP). Acts in the terminal step of the DOXP/MEP pathway for isoprenoid precursor biosynthesis. This is 4-hydroxy-3-methylbut-2-enyl diphosphate reductase from Prochlorococcus marinus (strain MIT 9515).